The following is a 332-amino-acid chain: Glycerol-3-phosphate dehydrogenase [NAD(P)+] (332 aa).

3 residues coordinate NADPH: tryptophan 11, arginine 30, and lysine 108. Positions 108, 137, and 139 each coordinate sn-glycerol 3-phosphate. Alanine 141 contacts NADPH. The sn-glycerol 3-phosphate site is built by lysine 192, aspartate 245, serine 255, arginine 256, and asparagine 257. The active-site Proton acceptor is lysine 192. Position 256 (arginine 256) interacts with NADPH. NADPH contacts are provided by valine 280 and glutamate 282.

It belongs to the NAD-dependent glycerol-3-phosphate dehydrogenase family.

The protein localises to the cytoplasm. It catalyses the reaction sn-glycerol 3-phosphate + NAD(+) = dihydroxyacetone phosphate + NADH + H(+). The enzyme catalyses sn-glycerol 3-phosphate + NADP(+) = dihydroxyacetone phosphate + NADPH + H(+). The protein operates within membrane lipid metabolism; glycerophospholipid metabolism. In terms of biological role, catalyzes the reduction of the glycolytic intermediate dihydroxyacetone phosphate (DHAP) to sn-glycerol 3-phosphate (G3P), the key precursor for phospholipid synthesis. The polypeptide is Glycerol-3-phosphate dehydrogenase [NAD(P)+] (Burkholderia pseudomallei (strain 1710b)).